A 716-amino-acid chain; its full sequence is Fatty acid oxidation complex subunit alpha (716 aa).

Residues 1-189 form an enoyl-CoA hydratase/isomerase region; that stretch reads MIYQSPTIQV…KVGAVDAVVA (189 aa). Aspartate 296 serves as a coordination point for substrate. Positions 311–716 are 3-hydroxyacyl-CoA dehydrogenase; the sequence is KAVNSAAVLG…AANNGSYYQA (406 aa). NAD(+)-binding positions include methionine 324, aspartate 343, 400 to 402, lysine 407, and serine 429; that span reads VVE. The active-site For 3-hydroxyacyl-CoA dehydrogenase activity is the histidine 450. NAD(+) is bound at residue asparagine 453. Substrate-binding residues include asparagine 500 and tyrosine 660.

In the N-terminal section; belongs to the enoyl-CoA hydratase/isomerase family. The protein in the C-terminal section; belongs to the 3-hydroxyacyl-CoA dehydrogenase family. As to quaternary structure, heterotetramer of two alpha chains (FadB) and two beta chains (FadA).

The catalysed reaction is a (3S)-3-hydroxyacyl-CoA + NAD(+) = a 3-oxoacyl-CoA + NADH + H(+). It catalyses the reaction a (3S)-3-hydroxyacyl-CoA = a (2E)-enoyl-CoA + H2O. It carries out the reaction a 4-saturated-(3S)-3-hydroxyacyl-CoA = a (3E)-enoyl-CoA + H2O. The enzyme catalyses (3S)-3-hydroxybutanoyl-CoA = (3R)-3-hydroxybutanoyl-CoA. The catalysed reaction is a (3Z)-enoyl-CoA = a 4-saturated (2E)-enoyl-CoA. It catalyses the reaction a (3E)-enoyl-CoA = a 4-saturated (2E)-enoyl-CoA. It participates in lipid metabolism; fatty acid beta-oxidation. Involved in the aerobic and anaerobic degradation of long-chain fatty acids via beta-oxidation cycle. Catalyzes the formation of 3-oxoacyl-CoA from enoyl-CoA via L-3-hydroxyacyl-CoA. It can also use D-3-hydroxyacyl-CoA and cis-3-enoyl-CoA as substrate. The protein is Fatty acid oxidation complex subunit alpha of Shewanella oneidensis (strain ATCC 700550 / JCM 31522 / CIP 106686 / LMG 19005 / NCIMB 14063 / MR-1).